Reading from the N-terminus, the 448-residue chain is Methionine aminopeptidase 2 (448 aa).

Positions 1 to 17 (MPATAEAADAATQATDA) are enriched in low complexity. The tract at residues 1–87 (MPATAEAADA…QTEPPSIGLT (87 aa)) is disordered. A compositionally biased stretch (basic and acidic residues) spans 21 to 34 (KLEENKLPEGQERG). The segment covering 35–46 (PEEEEDDDDDET) has biased composition (acidic residues). The segment covering 55–71 (KKKKKKKSGAKKKKSKT) has biased composition (basic residues). Position 200 (H200) interacts with substrate. A divalent metal cation is bound by residues D220, D231, and H300. H308 provides a ligand contact to substrate. E334 and E429 together coordinate a divalent metal cation.

The protein belongs to the peptidase M24A family. Methionine aminopeptidase eukaryotic type 2 subfamily. It depends on Co(2+) as a cofactor. Requires Zn(2+) as cofactor. Mn(2+) serves as cofactor. Fe(2+) is required as a cofactor.

The protein localises to the cytoplasm. It catalyses the reaction Release of N-terminal amino acids, preferentially methionine, from peptides and arylamides.. Its function is as follows. Cotranslationally removes the N-terminal methionine from nascent proteins. The N-terminal methionine is often cleaved when the second residue in the primary sequence is small and uncharged (Met-Ala-, Cys, Gly, Pro, Ser, Thr, or Val). The protein is Methionine aminopeptidase 2 of Malassezia globosa (strain ATCC MYA-4612 / CBS 7966) (Dandruff-associated fungus).